The sequence spans 23 residues: Ocellatin-LB2 (23 aa).

An Asparagine amide modification is found at Asn23.

Expressed by the skin glands.

Its subcellular location is the secreted. In terms of biological role, antibacterial peptide that inhibits the Gram-negative bacterium A.actinomycetemcomitans ATCC 29522 (MIC=210 uM). No activity against the bacteria E.coli ATCC 25922 and S.aureus ATCC 25923, or the fungi C.albicans ATCC 18804 and C.lusitaniae ATCC 56936. Does not show hemolytic activity towards rabbit erythrocytes. The polypeptide is Ocellatin-LB2 (Leptodactylus labyrinthicus (Labyrinth frog)).